The sequence spans 358 residues: Homoserine O-acetyltransferase (358 aa).

Positions 52–337 constitute an AB hydrolase-1 domain; that stretch reads NVILICHALT…DEPYGHDAFL (286 aa). Ser-148 functions as the Nucleophile in the catalytic mechanism. Substrate is bound at residue Arg-217. Catalysis depends on residues Asp-304 and His-333. Position 334 (Asp-334) interacts with substrate.

The protein belongs to the AB hydrolase superfamily. MetX family. As to quaternary structure, homodimer.

The protein localises to the cytoplasm. The enzyme catalyses L-homoserine + acetyl-CoA = O-acetyl-L-homoserine + CoA. It participates in amino-acid biosynthesis; L-methionine biosynthesis via de novo pathway; O-acetyl-L-homoserine from L-homoserine: step 1/1. Functionally, transfers an acetyl group from acetyl-CoA to L-homoserine, forming acetyl-L-homoserine. The protein is Homoserine O-acetyltransferase of Chlorobium luteolum (strain DSM 273 / BCRC 81028 / 2530) (Pelodictyon luteolum).